A 428-amino-acid polypeptide reads, in one-letter code: Aspartate--tRNA(Asp) ligase (428 aa).

Position 166 (E166) interacts with L-aspartate. Residues 188 to 191 are aspartate; it reads QLYK. Residue R210 coordinates L-aspartate. ATP-binding positions include 210-212, 218-220, and E351; these read RAE and RHL. The Mg(2+) site is built by E351 and S354. Residues S354 and R358 each contribute to the L-aspartate site. 399 to 402 serves as a coordination point for ATP; the sequence is GLER.

The protein belongs to the class-II aminoacyl-tRNA synthetase family. Type 2 subfamily. In terms of assembly, homodimer. The cofactor is Mg(2+).

Its subcellular location is the cytoplasm. The enzyme catalyses tRNA(Asp) + L-aspartate + ATP = L-aspartyl-tRNA(Asp) + AMP + diphosphate. In terms of biological role, catalyzes the attachment of L-aspartate to tRNA(Asp) in a two-step reaction: L-aspartate is first activated by ATP to form Asp-AMP and then transferred to the acceptor end of tRNA(Asp). The polypeptide is Aspartate--tRNA(Asp) ligase (Thermoplasma acidophilum (strain ATCC 25905 / DSM 1728 / JCM 9062 / NBRC 15155 / AMRC-C165)).